The primary structure comprises 623 residues: Chaperone protein HtpG (623 aa).

An a; substrate-binding region spans residues 1–341 (MEKREFKAES…SQDLSLNISR (341 aa)). A b region spans residues 342–549 (EMLQHDRQLS…EGEVSIEMEK (208 aa)). Residues 550 to 623 (ILSAMPNNQG…FTNDICKLMK (74 aa)) are c.

It belongs to the heat shock protein 90 family. In terms of assembly, homodimer.

It localises to the cytoplasm. In terms of biological role, molecular chaperone. Has ATPase activity. The polypeptide is Chaperone protein HtpG (Clostridium perfringens (strain 13 / Type A)).